We begin with the raw amino-acid sequence, 77 residues long: Acyl carrier protein (77 aa).

Residues 1–76 (MATFDDVKAV…DVVNYIDNLK (76 aa)) enclose the Carrier domain. Position 36 is an O-(pantetheine 4'-phosphoryl)serine (Ser-36).

The protein belongs to the acyl carrier protein (ACP) family. 4'-phosphopantetheine is transferred from CoA to a specific serine of apo-ACP by AcpS. This modification is essential for activity because fatty acids are bound in thioester linkage to the sulfhydryl of the prosthetic group.

It is found in the cytoplasm. It participates in lipid metabolism; fatty acid biosynthesis. Carrier of the growing fatty acid chain in fatty acid biosynthesis. The polypeptide is Acyl carrier protein (Campylobacter jejuni (strain RM1221)).